The sequence spans 870 residues: Suppressor of yeast profilin deletion (870 aa).

Over residues 252–267 the composition is skewed to polar residues; it reads SSSSKEVVPNNASPAS. Disordered stretches follow at residues 252-298 and 310-574; these read SSSS…RKSA and SSSL…TLSS. K256 participates in a covalent cross-link: Glycyl lysine isopeptide (Lys-Gly) (interchain with G-Cter in ubiquitin). At S264 the chain carries Phosphoserine. The segment covering 283–292 has biased composition (basic and acidic residues); sequence TEREKKSPQK. Residues 310–323 show a composition bias toward polar residues; that stretch reads SSSLTHNDLMNNEF. S331 bears the Phosphoserine mark. Positions 333–342 are enriched in basic residues; sequence KSKKSSHTLR. The span at 367–378 shows a compositional bias: polar residues; it reads HIQASITETPNN. The span at 379–390 shows a compositional bias: low complexity; sequence SSTRVSSTATSS. Over residues 398–409 the composition is skewed to polar residues; it reads PTYSSSKSNNWT. T416 bears the Phosphothreonine mark. Low complexity predominate over residues 473 to 485; it reads PISISQPPLQPQS. A phosphoserine mark is found at S496 and S500. Positions 497–514 are enriched in polar residues; it reads PSISLPTATVDNQPSGQV. Position 577 is a phosphothreonine (T577). The 261-residue stretch at 609 to 869 folds into the MHD domain; that stretch reads QFGLNASIAE…TLTTGNYHGL (261 aa).

This sequence belongs to the SYP1 family. In terms of assembly, interacts with CDC3, CDC10, CDC11, CDC12, EDE1 and EPS15.

It localises to the bud neck. Functionally, multi-functional protein that contributes to the endocytic process, but also to events that occur at the neck during budding and/or cytokinesis. Plays a role as an endocytic adapters with membrane-tubulation activity that associates with transmembrane cargo proteins and initiates the formation of endocytic sites. Contributes to the stabilization of the nascent clathrin-coated pit. Also plays a role in late endocytosis by mediating vesiculation. Involved in the regulation of cell cycle-dependent dynamics of the septin cytoskeleton by promoting septin turnover in different cell cycle stages. May act through the RHO2 signaling pathway to repolarize cortical actin patches in profilin-deficient cells. The sequence is that of Suppressor of yeast profilin deletion (SYP1) from Saccharomyces cerevisiae (strain ATCC 204508 / S288c) (Baker's yeast).